Reading from the N-terminus, the 353-residue chain is Paraneoplastic antigen Ma1 homolog (353 aa).

Belongs to the PNMA family. In terms of tissue distribution, predominantly expressed in testis. Very low levels in the brain, including in the piriform cortex, hippocampus and some subcortical nuclei.

The protein localises to the nucleus. The protein resides in the nucleolus. The protein is Paraneoplastic antigen Ma1 homolog (Pnma1) of Mus musculus (Mouse).